A 195-amino-acid chain; its full sequence is Peptidyl-tRNA hydrolase (195 aa).

Residue Y18 coordinates tRNA. The Proton acceptor role is filled by H23. The tRNA site is built by F69, N71, and N117.

Belongs to the PTH family. As to quaternary structure, monomer.

It is found in the cytoplasm. It carries out the reaction an N-acyl-L-alpha-aminoacyl-tRNA + H2O = an N-acyl-L-amino acid + a tRNA + H(+). In terms of biological role, hydrolyzes ribosome-free peptidyl-tRNAs (with 1 or more amino acids incorporated), which drop off the ribosome during protein synthesis, or as a result of ribosome stalling. Its function is as follows. Catalyzes the release of premature peptidyl moieties from peptidyl-tRNA molecules trapped in stalled 50S ribosomal subunits, and thus maintains levels of free tRNAs and 50S ribosomes. The protein is Peptidyl-tRNA hydrolase of Hahella chejuensis (strain KCTC 2396).